We begin with the raw amino-acid sequence, 1150 residues long: Fl(2)d-associated complex component (1150 aa).

Residues 1–10 (MEKKAKESLR) are compositionally biased toward basic and acidic residues. Disordered stretches follow at residues 1–444 (MEKK…EEER), 477–710 (QGRE…PPPL), 833–914 (ASED…MDTN), and 1034–1053 (KEQGQQRELDGDEEPPAKIP). Residues 11–20 (RYKKAARHSA) show a composition bias toward basic residues. The segment covering 21-44 (THSSSSDSTSDSDSGSSSYSSTDS) has biased composition (low complexity). Residues 47 to 69 (GVGGVGVGVGVPGGAGGPGGSGS) show a composition bias toward gly residues. The span at 72 to 97 (GHPHTHGHGHHPRSAERHHRKKKSSR) shows a compositional bias: basic residues. The segment covering 98 to 107 (RGGSSSGDEP) has biased composition (low complexity). 2 stretches are compositionally biased toward basic residues: residues 110–144 (SRRKRDKRDHVQKKLVAKRNHIKRKLKEARLKKRA) and 162–175 (AKLKKLAERKRLRA). Residues 122-147 (KKLVAKRNHIKRKLKEARLKKRAAAA) adopt a coiled-coil conformation. Basic and acidic residues predominate over residues 176–199 (ASKEQRERDKLRVVQRDRERDHHR). Low complexity predominate over residues 202 to 215 (SSRSPPSSSTTTTT). Positions 269–347 (PSLERERERE…KLRRQEEEEG (79 aa)) form a coiled coil. Basic and acidic residues-rich tracts occupy residues 270-414 (SLER…DEMR), 428-444 (YAPRLRDPRELYSEEER), and 492-529 (PDERERLIRDRERDRERERDRERERNIGPRGDFRPEWE). Residues 537-558 (AGGGPGGPSGTPGRPGGFVGGP) are compositionally biased toward gly residues. Composition is skewed to basic and acidic residues over residues 589–611 (ERERERERERDRERERDREDRPD) and 630–640 (WLEHDQREKPR). Residues 660–669 (PPAPSHPHPA) are compositionally biased toward pro residues. A compositionally biased stretch (basic and acidic residues) spans 693 to 702 (GHGDHGERPG). The segment covering 851–861 (QSLNLNQSLSS) has biased composition (low complexity). Residues 879–889 (ELSEISDSDDD) are compositionally biased toward acidic residues. Over residues 890-903 (ILNKTDKVRPKNEL) the composition is skewed to basic and acidic residues. The span at 905–914 (TETEQEMDTN) shows a compositional bias: acidic residues.

This sequence belongs to the ZC3H13 family. As to quaternary structure, component of the WMM complex, a N6-methyltransferase complex composed of a catalytic subcomplex, named MAC, and of an associated subcomplex, named MACOM. The MAC subcomplex is composed of Ime4/Mettl3 and Mettl14. The MACOM subcomplex is composed of fl(2)d, Flacc/Xio, Hakai, vir, and, in some cases of nito. Widely expressed during embryogenesis but shows enrichment in the neuroectoderm.

It is found in the nucleus. In terms of biological role, associated component of the WMM complex, a complex that mediates N6-methyladenosine (m6A) methylation of mRNAs, a modification that plays a role in the efficiency of mRNA splicing and is required for sex determination. In the WMM complex, acts as a key regulator of m6A methylation by bridging fl(2)d to the RNA-binding component nito. Required for sex determination and dosage compensation via Sxl alternative splicing: m6A methylation acts as a key regulator of Sxl pre-mRNA and promotes female-specific alternative splicing of Sxl, which determines female physiognomy. This chain is Fl(2)d-associated complex component, found in Drosophila melanogaster (Fruit fly).